The following is a 529-amino-acid chain: Type I restriction enzyme EcoKI methylase subunit (529 aa).

S-adenosyl-L-methionine contacts are provided by residues 148 to 153, 178 to 180, and Glu-216; these read QYFTPR and TAG.

This sequence belongs to the N(4)/N(6)-methyltransferase family. The type I restriction/modification system is composed of three polypeptides R, M and S. The restriction enzyme has stoichiometry R(2)M(2)S(1). The methyltransferase is composed of M(2)S(1). In terms of assembly, (Microbial infection) Interacts with Escherichia phage T7 protein Ocr; this interaction leads to the inhibition of the methyltransferase restriction enzyme M.EcoKI composed of M(2)S(1).

It catalyses the reaction a 2'-deoxyadenosine in DNA + S-adenosyl-L-methionine = an N(6)-methyl-2'-deoxyadenosine in DNA + S-adenosyl-L-homocysteine + H(+). Its function is as follows. The subtype gamma methyltransferase (M) subunit of a type I restriction enzyme. The M and S subunits together form a methyltransferase (MTase) that methylates A-2 on the top and A-3 on the bottom strand of the sequence 5'-AACN(6)GTGC-3'. In the presence of the R subunit the complex can also act as an endonuclease, binding to the same target sequence but cutting the DNA some distance from this site. Whether the DNA is cut or modified depends on the methylation state of the target sequence. When the target site is unmodified, the DNA is cut. When the target site is hemimethylated, the complex acts as a maintenance MTase modifying the DNA so that both strands become methylated. After locating a non-methylated recognition site, the enzyme complex serves as a molecular motor that translocates DNA in an ATP-dependent manner until a collision occurs that triggers cleavage. This chain is Type I restriction enzyme EcoKI methylase subunit, found in Escherichia coli (strain K12).